A 172-amino-acid chain; its full sequence is R-phycocyanin-2 beta chain (172 aa).

Asn-72 carries the post-translational modification N4-methylasparagine. (2R,3E)-phycocyanobilin is bound at residue Cys-82. (2R,3E)-phycoerythrobilin is bound at residue Cys-153.

It belongs to the phycobiliprotein family. As to quaternary structure, heterodimer of an alpha and a beta chain. In terms of processing, contains two covalently linked bilin chromophores.

It localises to the cellular thylakoid membrane. Functionally, light-harvesting photosynthetic bile pigment-protein from the phycobiliprotein complex. The protein is R-phycocyanin-2 beta chain (rpcB) of Synechococcus sp. (strain WH8020).